Reading from the N-terminus, the 89-residue chain is Small ribosomal subunit protein uS15 (89 aa).

It belongs to the universal ribosomal protein uS15 family. Part of the 30S ribosomal subunit. Forms a bridge to the 50S subunit in the 70S ribosome, contacting the 23S rRNA.

Its function is as follows. One of the primary rRNA binding proteins, it binds directly to 16S rRNA where it helps nucleate assembly of the platform of the 30S subunit by binding and bridging several RNA helices of the 16S rRNA. In terms of biological role, forms an intersubunit bridge (bridge B4) with the 23S rRNA of the 50S subunit in the ribosome. This chain is Small ribosomal subunit protein uS15, found in Shewanella baltica (strain OS185).